Reading from the N-terminus, the 142-residue chain is Cytochrome c-type biogenesis protein CcmE (142 aa).

Residues 1–2 (MK) are Cytoplasmic-facing. A helical; Signal-anchor for type II membrane protein membrane pass occupies residues 3–23 (GKYLLGILVILGALGYMVFGG). The Periplasmic portion of the chain corresponds to 24 to 142 (LGRNLVYFLT…EVRKLIEEAQ (119 aa)). Residues H118 and Y122 each coordinate heme.

This sequence belongs to the CcmE/CycJ family.

The protein resides in the cell inner membrane. In terms of biological role, heme chaperone required for the biogenesis of c-type cytochromes. Transiently binds heme delivered by CcmC and transfers the heme to apo-cytochromes in a process facilitated by CcmF and CcmH. The chain is Cytochrome c-type biogenesis protein CcmE from Thermus thermophilus (strain ATCC 27634 / DSM 579 / HB8).